A 79-amino-acid chain; its full sequence is Small ribosomal subunit protein bS18 (79 aa).

The protein belongs to the bacterial ribosomal protein bS18 family. As to quaternary structure, part of the 30S ribosomal subunit. Forms a tight heterodimer with protein bS6.

Its function is as follows. Binds as a heterodimer with protein bS6 to the central domain of the 16S rRNA, where it helps stabilize the platform of the 30S subunit. The chain is Small ribosomal subunit protein bS18 from Bacillus pumilus (strain SAFR-032).